A 347-amino-acid polypeptide reads, in one-letter code: D-alanine--D-alanine ligase (347 aa).

In terms of domain architecture, ATP-grasp spans 131-333; it reads KRVLESAGIA…YPKLIERLVD (203 aa). 161 to 216 serves as a coordination point for ATP; that stretch reads EEKLAYPVFTKPSNMGSSVGISKSENQEELRQALKLAFRYDSRVLVEQGVNAREIE. Residues aspartate 287, glutamate 300, and asparagine 302 each coordinate Mg(2+).

This sequence belongs to the D-alanine--D-alanine ligase family. Requires Mg(2+) as cofactor. It depends on Mn(2+) as a cofactor.

The protein localises to the cytoplasm. It catalyses the reaction 2 D-alanine + ATP = D-alanyl-D-alanine + ADP + phosphate + H(+). It participates in cell wall biogenesis; peptidoglycan biosynthesis. Functionally, cell wall formation. The chain is D-alanine--D-alanine ligase from Streptococcus pneumoniae serotype 4 (strain ATCC BAA-334 / TIGR4).